Reading from the N-terminus, the 198-residue chain is Protein uvp1 (198 aa).

Positions 1 to 140 constitute a Resolvase/invertase-type recombinase catalytic domain; that stretch reads MIIGYARKST…SGLAAARARG (140 aa). The O-(5'-phospho-DNA)-serine intermediate role is filled by serine 9. Residues 168 to 187 constitute a DNA-binding region (H-T-H motif); the sequence is VGAVAKRFNVSRMTIYRYTT.

This sequence belongs to the site-specific recombinase resolvase family.

In terms of biological role, cooperates with the mucAB genes in the DNA repair process. Could be a resolvase-invertase protein. This chain is Protein uvp1 (uvp1), found in Escherichia coli.